Consider the following 490-residue polypeptide: Beta-glucosidase 42 (490 aa).

A beta-D-glucoside-binding positions include Gln35, His137, 182-183 (NE), Tyr317, and Glu388. Glu183 serves as the catalytic Proton donor. The Nucleophile role is filled by Glu388. N-linked (GlcNAc...) asparagine glycosylation is present at Asn420. A beta-D-glucoside contacts are provided by residues Trp437, 444–445 (EW), and Phe453.

Belongs to the glycosyl hydrolase 1 family. As to expression, expressed at low levels predominantly in root epidermal cells.

It catalyses the reaction Hydrolysis of terminal, non-reducing beta-D-glucosyl residues with release of beta-D-glucose.. Functionally, glucosidase that hydrolyzes scopolin and various beta-glucosides, cellooligosaccharides (mainly cellotriose) and laminarioligosaccharides. Can use p-nitrophenyl-beta-glucosides (pNP beta-Glc) and p-nitrophenyl-beta-D-fucosides (pNP beta-D-Fuc) as substrates, and, to a lower extent, beta-galactosides, beta-mannosides and beta-xylosides. Involved in the secretion of root-derived phenolics upon iron ions (Fe) depletion. Promotes disease resistance toward B.cinerea, H.arabidopsidis and P.syringae pv. tomato DC3000. Required during rhizobacteria-mediated (e.g. P.fluorescens WCS417r) broad-spectrum induced systemic resistance (ISR) against several pathogens. This chain is Beta-glucosidase 42, found in Arabidopsis thaliana (Mouse-ear cress).